A 140-amino-acid polypeptide reads, in one-letter code: Cytochrome c-type biogenesis protein CcmE (140 aa).

Topologically, residues 1–7 (MTKRQNR) are cytoplasmic. Residues 8 to 28 (MVLVALLVIGVSLAGYLGLKA) traverse the membrane as a helical; Signal-anchor for type II membrane protein segment. Residues 29-140 (FNENLLYFLS…DALEKAKNKQ (112 aa)) lie on the Periplasmic side of the membrane. 2 residues coordinate heme: His-120 and Tyr-124.

The protein belongs to the CcmE/CycJ family.

The protein localises to the cell inner membrane. In terms of biological role, heme chaperone required for the biogenesis of c-type cytochromes. Transiently binds heme delivered by CcmC and transfers the heme to apo-cytochromes in a process facilitated by CcmF and CcmH. The chain is Cytochrome c-type biogenesis protein CcmE from Vesicomyosocius okutanii subsp. Calyptogena okutanii (strain HA).